Consider the following 288-residue polypeptide: HTH-type transcriptional regulator CzcR (288 aa).

In terms of domain architecture, HTH lysR-type spans 1–58 (MELRDLQIFQSVADQGSVSSAAKELNYVQSNVTARIKQLENELKTPLFYRHKRGMTLT). A DNA-binding region (H-T-H motif) is located at residues 18-37 (VSSAAKELNYVQSNVTARIK).

Belongs to the LysR transcriptional regulatory family.

This chain is HTH-type transcriptional regulator CzcR (czcR), found in Bacillus cereus (strain ATCC 10987 / NRS 248).